The following is an 811-amino-acid chain: Lysine-specific histone demethylase 1 homolog 3 (811 aa).

Positions 1–10 are enriched in pro residues; it reads MSDQPPPYTP. The tract at residues 1–79 is disordered; sequence MSDQPPPYTP…PSAQPPPRAS (79 aa). A compositionally biased stretch (basic residues) spans 44 to 55; it reads NKRKRTGFRRKL. Residues 56 to 71 are compositionally biased toward low complexity; sequence PSGSPAAPVAVAASPS. Positions 88–189 constitute an SWIRM domain; sequence NREPTAEAVT…FGVAPAIKER (102 aa). Residues Glu227, Arg229, Arg235, and Glu609 each contribute to the FAD site. Residues 790–811 form a disordered region; sequence RNSSRTKTRPSKLKIGIPKSKS.

Belongs to the flavin monoamine oxidase family. FAD serves as cofactor.

Functionally, probable histone demethylase. This chain is Lysine-specific histone demethylase 1 homolog 3, found in Oryza sativa subsp. indica (Rice).